The sequence spans 314 residues: 2,3-dihydroxyphenylpropionate/2,3-dihydroxicinnamic acid 1,2-dioxygenase (314 aa).

His115 acts as the Proton donor in catalysis. His179 functions as the Proton acceptor in the catalytic mechanism.

This sequence belongs to the LigB/MhpB extradiol dioxygenase family. Homotetramer. The cofactor is Fe(2+).

It catalyses the reaction 3-(2,3-dihydroxyphenyl)propanoate + O2 = (2Z,4E)-2-hydroxy-6-oxonona-2,4-dienedioate + H(+). It carries out the reaction (2E)-3-(2,3-dihydroxyphenyl)prop-2-enoate + O2 = (2Z,4E,7E)-2-hydroxy-6-oxonona-2,4,7-trienedioate + H(+). It participates in aromatic compound metabolism; 3-phenylpropanoate degradation. Its function is as follows. Catalyzes the non-heme iron(II)-dependent oxidative cleavage of 2,3-dihydroxyphenylpropionic acid and 2,3-dihydroxicinnamic acid into 2-hydroxy-6-ketononadienedioate and 2-hydroxy-6-ketononatrienedioate, respectively. This Rhodococcus jostii (strain RHA1) protein is 2,3-dihydroxyphenylpropionate/2,3-dihydroxicinnamic acid 1,2-dioxygenase.